Here is a 793-residue protein sequence, read N- to C-terminus: Ent-copalyl diphosphate synthase, chloroplastic (793 aa).

The transit peptide at Met1 to Cys47 directs the protein to the chloroplast. Positions 372 and 374 each coordinate Mg(2+). The short motif at Asp372–Asp375 is the DXDD motif element.

It belongs to the terpene synthase family. Requires Mg(2+) as cofactor.

It localises to the plastid. It is found in the chloroplast. The catalysed reaction is (2E,6E,10E)-geranylgeranyl diphosphate = ent-copalyl diphosphate. The protein operates within plant hormone biosynthesis; gibberellin biosynthesis. Its function is as follows. Catalyzes the conversion of geranylgeranyl diphosphate (GGPP) to the gibberellin precursor ent-copalyl diphosphate (CPP). This chain is Ent-copalyl diphosphate synthase, chloroplastic, found in Salvia miltiorrhiza (Chinese sage).